We begin with the raw amino-acid sequence, 1452 residues long: Pleiotropic drug resistance protein 1 (1452 aa).

Positions 152-425 (LNYLHILPNR…FEYMGFICPE (274 aa)) constitute an ABC transporter 1 domain. 185-192 (GPPSSGKT) lines the ATP pocket. An ABC transmembrane type-2 1 domain is found at 504–716 (LLKACTAREY…AQNAIAVNEF (213 aa)). The next 7 membrane-spanning stretches (helical) occupy residues 521–541 (FVYI…MTLF), 554–574 (GAVF…NGFS), 609–629 (IPIT…VIGF), 640–660 (LLLL…MGAL), 664–684 (IIVA…MGGF), 694–714 (WWIW…IAVN), and 753–773 (IGAG…AVAL). A disordered region spans residues 808–830 (LGKSSSEKGNDVRRSASSRSMSS). A compositionally biased stretch (basic and acidic residues) spans 812-821 (SSEKGNDVRR). Positions 855–1107 (ITFDDIRYAV…HLIKYFEGID (253 aa)) constitute an ABC transporter 2 domain. Residue 900–907 (GVSGAGKT) participates in ATP binding. Residues 1180–1394 (TQCMACFWKQ…TLYGLIASQF (215 aa)) form the ABC transmembrane type-2 2 domain. Transmembrane regions (helical) follow at residues 1199-1219 (YTAV…TIFW), 1239-1259 (YIAV…VIAI), 1287-1307 (LPYL…MIGF), 1314-1334 (FFWY…YGMM), 1344-1364 (IAAI…GFIV), 1375-1395 (WYYY…SQFG), and 1421-1441 (FVGY…FIFA).

The protein belongs to the ABC transporter superfamily. ABCG family. PDR (TC 3.A.1.205) subfamily. As to expression, expressed in root hypodermal passage cells. Expressed in stem tissues, particularly the vasculature and nodes adjacent to leaf axils.

It is found in the cell membrane. Functionally, cellular strigolactone (SL) transporter required for the exudation of SL from the root to the soil. The presence of SL in the vicinity of the roots is required for development of symbiotic interactions with arbuscular mycorrhizal fungi (AMF). Transports SL in the above ground tissues and is required for the control of shoot branching. SL regulates plant shoot architecture by inhibiting the outgrowth of axillary buds. Involved in the regulation of shootward and outward directional strigolactone transport in roots. Due to its polar localization in root cells, mediates directional shootward strigolactone transport, as well as localized outward directional transport for exudation to the soil. The chain is Pleiotropic drug resistance protein 1 from Petunia axillaris (Large white petunia).